The following is a 1279-amino-acid chain: Talin-A (1279 aa).

The region spanning arginine 84 to arginine 365 is the FERM domain.

It is found in the cytoplasm. The protein localises to the cytoskeleton. It localises to the cell cortex. Actin-binding protein that may be involved in the control of cell motility and chemotaxis. The protein is Talin-A (talA) of Dictyostelium discoideum (Social amoeba).